Reading from the N-terminus, the 243-residue chain is MATSRLQLEGDDSVHLHITHANLKSFSADARFSPQMSVEAVKEKLWKKCGTSVNSMALELYDDSGSKVAVLSDDSRPLGFFSPFDGFRLHIIDLDPSSVTTGGWLEDTSLVEKYNISEEDYAKRTDSFRKFKEKRVSQNPVAAEAKTKENYMEDLCANIKVGDRCQVEPGEKRGMVKYVGRAESLGPGYWVGIQYDEPLGKHDGMVKGTRFFECPRLQGGMVRPDKVKVGDYPERDPFEEDEI.

The 43-residue stretch at 181–223 (RAESLGPGYWVGIQYDEPLGKHDGMVKGTRFFECPRLQGGMVR) folds into the CAP-Gly domain.

This sequence belongs to the TBCB family. Supercomplex made of cofactors A to E. Cofactors A and D function by capturing and stabilizing tubulin in a quasi-native conformation. Cofactor E binds to the cofactor D-tubulin complex; interaction with cofactor C then causes the release of tubulin polypeptides that are committed to the native state. Interacts with TUBA6. Expressed in roots, stems, leaves, flowers and siliques.

Its subcellular location is the cytoplasm. Functionally, involved in control of cell division. Regulates probably the availability of alpha-tubulin for dimerization of alpha-/beta-tubulin, which is required for proper microtubule biogenesis. Decreased expression of TFCB results in enlarged mesophyll cells and leaf epidermal cells with bulged nuclei, increased ploidy and increased numbers of spindles and phragmoplasts. This is Tubulin-folding cofactor B (TFCB) from Arabidopsis thaliana (Mouse-ear cress).